A 270-amino-acid chain; its full sequence is MSDSITNIFVISDSVGETGLSLITAGTVQFPNSKFNIRRFPLTKTISLLQGILNKAKRENAIILHTFVNPELSDYVNNFGKENNLHVIDALTGVVQTLAEITGEKPLNAAGLKHKLNPDYFKRIEALEFAVTYDDGKDPSGFLKADIVLLGVSRTSKTPLSLYLANQGYKVANLPLVPKTQIPKEIYQVDKKRIFGLTNDPEVLNNIRRQRMISYGLDPDTVYSNMDNINQELEFATNLYKELGCLQINVATKSIEETATLIIESLDSED.

151–158 is an ADP binding site; the sequence is GVSRTSKT.

It belongs to the pyruvate, phosphate/water dikinase regulatory protein family. PDRP subfamily.

The enzyme catalyses N(tele)-phospho-L-histidyl/L-threonyl-[pyruvate, phosphate dikinase] + ADP = N(tele)-phospho-L-histidyl/O-phospho-L-threonyl-[pyruvate, phosphate dikinase] + AMP + H(+). It carries out the reaction N(tele)-phospho-L-histidyl/O-phospho-L-threonyl-[pyruvate, phosphate dikinase] + phosphate + H(+) = N(tele)-phospho-L-histidyl/L-threonyl-[pyruvate, phosphate dikinase] + diphosphate. Its function is as follows. Bifunctional serine/threonine kinase and phosphorylase involved in the regulation of the pyruvate, phosphate dikinase (PPDK) by catalyzing its phosphorylation/dephosphorylation. This Ligilactobacillus salivarius (strain UCC118) (Lactobacillus salivarius) protein is Putative pyruvate, phosphate dikinase regulatory protein.